A 241-amino-acid chain; its full sequence is Ribonuclease PH (241 aa).

Residues arginine 87 and 125 to 127 (GTR) each bind phosphate.

Belongs to the RNase PH family. In terms of assembly, homohexameric ring arranged as a trimer of dimers.

It catalyses the reaction tRNA(n+1) + phosphate = tRNA(n) + a ribonucleoside 5'-diphosphate. In terms of biological role, phosphorolytic 3'-5' exoribonuclease that plays an important role in tRNA 3'-end maturation. Removes nucleotide residues following the 3'-CCA terminus of tRNAs; can also add nucleotides to the ends of RNA molecules by using nucleoside diphosphates as substrates, but this may not be physiologically important. Probably plays a role in initiation of 16S rRNA degradation (leading to ribosome degradation) during starvation. This Salinispora tropica (strain ATCC BAA-916 / DSM 44818 / JCM 13857 / NBRC 105044 / CNB-440) protein is Ribonuclease PH.